Reading from the N-terminus, the 528-residue chain is Cytochrome P450 monooxygenase ppsD (528 aa).

Residues 2 to 21 traverse the membrane as a helical segment; the sequence is LVLVSLVLCLTGFCLLQWAL. Residue Asn137 is glycosylated (N-linked (GlcNAc...) asparagine). A heme-binding site is contributed by Cys441. Residues Asn450 and Asn463 are each glycosylated (N-linked (GlcNAc...) asparagine).

The protein belongs to the cytochrome P450 family. Requires heme as cofactor.

Its subcellular location is the membrane. Its function is as follows. Cytochrome P450 monooxygenase; part of the gene cluster that mediates the biosynthesis of 2,4'-dihydroxy-3'-methoxypropiophenone. The first step of the pathway is the conversion of acetate into acetyl-CoA by the acyl-CoA ligase ppsA. Acetyl-CoA is then used as a starter unit by the polyketide synthase ppsB and condensed with 4 malonyl-CoA unit to produce the pentaketide backbone. During polyketide extension, the polykedite chain is probably reduced and dehydrated by the KR and PT domains, respectively. O-methylation seems to be catalyzed by an unknown methyltransferase rather than by the CMeT domain of ppsB. Two hydroxylations and one further decarboxylation step catalyzed by yet unknown enzymes are then required to yield 4'-hydroxy-3'-methoxypropiophenone. PpsC functions as a carrier protein to transport 4'-hydroxy-3'-methoxypropiophenone to a specific cell compartment in which 4'-hydroxy-3'-methoxypropiophenone is hydroxylated to 2,4'-dihydroxy-3'-methoxypropiophenone by a still to be identified enzyme. The polypeptide is Cytochrome P450 monooxygenase ppsD (Aspergillus oryzae (strain ATCC 42149 / RIB 40) (Yellow koji mold)).